The chain runs to 866 residues: DNA topoisomerase 3-beta (866 aa).

In terms of domain architecture, Toprim spans 4–149; sequence TVLMVAEKPS…RIFRAKFSSV (146 aa). E10, D114, and D116 together coordinate Mg(2+). The region spanning 165-585 is the Topo IA-type catalytic domain; sequence SKDEALAVDA…HVLQQFMKKY (421 aa). Positions 207–212 are interaction with DNA; it reads SYGPCQ. The active-site O-(5'-phospho-DNA)-tyrosine intermediate is Y329. The span at 830-853 shows a compositional bias: basic residues; sequence MRRGRGRGRGRGRGRGSSRGRRGS. Positions 830-866 are disordered; it reads MRRGRGRGRGRGRGRGSSRGRRGSSRHDDPKMSFRDF. The span at 854-866 shows a compositional bias: basic and acidic residues; sequence SRHDDPKMSFRDF.

Belongs to the type IA topoisomerase family. Mg(2+) serves as cofactor.

The catalysed reaction is ATP-independent breakage of single-stranded DNA, followed by passage and rejoining.. Releases the supercoiling and torsional tension of DNA introduced during the DNA replication and transcription by transiently cleaving and rejoining one strand of the DNA duplex. Introduces a single-strand break via transesterification at a target site in duplex DNA. The scissile phosphodiester is attacked by the catalytic tyrosine of the enzyme, resulting in the formation of a DNA-(5'-phosphotyrosyl)-enzyme intermediate and the expulsion of a 3'-OH DNA strand. The free DNA strand than undergoes passage around the unbroken strand thus removing DNA supercoils. Finally, in the religation step, the DNA 3'-OH attacks the covalent intermediate to expel the active-site tyrosine and restore the DNA phosphodiester backbone. This is DNA topoisomerase 3-beta (TOP3B) from Oryza sativa subsp. japonica (Rice).